The following is a 92-amino-acid chain: Small ribosomal subunit protein uS19 (92 aa).

The protein belongs to the universal ribosomal protein uS19 family.

Protein S19 forms a complex with S13 that binds strongly to the 16S ribosomal RNA. This is Small ribosomal subunit protein uS19 from Thermosynechococcus vestitus (strain NIES-2133 / IAM M-273 / BP-1).